The primary structure comprises 131 residues: Cystatin J (131 aa).

Positions 1 to 18 (MHLYLCVLVCLSIGMANC) are cleaved as a signal peptide. Residues 35 to 109 (DEILLTGVEF…RMNLPTKCSF (75 aa)) form the Cystatin domain. The Secondary area of contact signature appears at 68-72 (QVVAG). 2 disulfides stabilise this stretch: C86–C97 and C107–C128.

It belongs to the cystatin family.

It localises to the secreted. The protein localises to the nematocyst. This recombinant protein inhibits the C1 cysteine protease papain (Ki is below 0.5 nM). The protein is Cystatin J of Cyanea capillata (Lion's mane jellyfish).